A 385-amino-acid polypeptide reads, in one-letter code: uncharacterized protein (385 aa).

9 helical membrane passes run 12–32, 50–70, 90–110, 132–152, 195–215, 233–253, 272–292, 312–332, and 335–355; these read GVAI…PKAA, WAFL…LLFG, LLVL…ILLA, FNTG…LGLI, LALG…GAAL, TGFV…ALQW, LSAP…WPQL, YLLQ…FMHF, and LELL…SVIW.

The protein to B.subtilis YxaH and YrkO.

The protein resides in the cell membrane. In terms of biological role, involved in transport. This is an uncharacterized protein from Escherichia coli (strain K12).